Here is a 467-residue protein sequence, read N- to C-terminus: ATP synthase subunit beta (467 aa).

156 to 163 (GGAGVGKT) is an ATP binding site.

Belongs to the ATPase alpha/beta chains family. As to quaternary structure, F-type ATPases have 2 components, CF(1) - the catalytic core - and CF(0) - the membrane proton channel. CF(1) has five subunits: alpha(3), beta(3), gamma(1), delta(1), epsilon(1). CF(0) has three main subunits: a(1), b(2) and c(9-12). The alpha and beta chains form an alternating ring which encloses part of the gamma chain. CF(1) is attached to CF(0) by a central stalk formed by the gamma and epsilon chains, while a peripheral stalk is formed by the delta and b chains.

The protein resides in the cell membrane. It catalyses the reaction ATP + H2O + 4 H(+)(in) = ADP + phosphate + 5 H(+)(out). Produces ATP from ADP in the presence of a proton gradient across the membrane. The catalytic sites are hosted primarily by the beta subunits. The protein is ATP synthase subunit beta of Cytobacillus firmus (Bacillus firmus).